A 590-amino-acid polypeptide reads, in one-letter code: V-type ATP synthase alpha chain (590 aa).

231-238 (GPFGSGKT) contacts ATP.

This sequence belongs to the ATPase alpha/beta chains family.

The enzyme catalyses ATP + H2O + 4 H(+)(in) = ADP + phosphate + 5 H(+)(out). In terms of biological role, produces ATP from ADP in the presence of a proton gradient across the membrane. The V-type alpha chain is a catalytic subunit. The protein is V-type ATP synthase alpha chain of Clostridium botulinum (strain ATCC 19397 / Type A).